The primary structure comprises 491 residues: Probable folate-biopterin transporter 4 (491 aa).

6 consecutive transmembrane segments (helical) span residues 14-34 (VAFLWLVCLIYFTQGFRSFVW), 52-72 (SQFVFSVAFFPWSIKPLYGII), 84-104 (TPYLVISTVLSLVPWLVLGLD), 112-132 (LYLMIFLTVQNLGSAMADVVI), 154-174 (VSWFAMAVGGVCGSLLGGYAL), and 179-199 (IETIFLLFTVLPALQLLSCAL). The segment at 222–262 (KSLTSNDNYPDTSKSNTRRRKGQKKGKKGDSNGKSETQKKQ) is disordered. A compositionally biased stretch (polar residues) spans 224-236 (LTSNDNYPDTSKS). Basic residues predominate over residues 237–248 (NTRRRKGQKKGK). Residues 249-260 (KGDSNGKSETQK) are compositionally biased toward basic and acidic residues. Helical transmembrane passes span 294-314 (MAWFFIAHITVPNLSTVMFYY), 323-343 (AAFLGTARVVGWLGLMFGTFI), 356-376 (SLLFAHIGLSVTILLDMVLVS), 389-411 (MVLFGSALGDAINQLKFMPFLIL), 437-457 (TVGSFMGAGLASLLGISSGSF), and 461-481 (FMGLAIQVFCTYIPVLFLFLI).

This sequence belongs to the major facilitator superfamily. Folate-biopterin transporter (TC 2.A.71) family.

It is found in the membrane. Could mediate folate transport. The sequence is that of Probable folate-biopterin transporter 4 from Arabidopsis thaliana (Mouse-ear cress).